We begin with the raw amino-acid sequence, 221 residues long: UPF0758 protein NTHI1125 (221 aa).

The MPN domain maps to 98-221 (PIINDLETVK…CYSFAENCLL (124 aa)). Zn(2+)-binding residues include histidine 170, histidine 172, and aspartate 183. A JAMM motif motif is present at residues 170–183 (HNHPSGITEPSYSD).

The protein belongs to the UPF0758 family.

The polypeptide is UPF0758 protein NTHI1125 (Haemophilus influenzae (strain 86-028NP)).